Consider the following 254-residue polypeptide: Type III pantothenate kinase 2 (254 aa).

6–13 (DMGNSHIH) provides a ligand contact to ATP. 107–110 (GADR) lines the substrate pocket. D109 acts as the Proton acceptor in catalysis. D130 is a K(+) binding site. Residue T133 participates in ATP binding. T185 is a substrate binding site.

It belongs to the type III pantothenate kinase family. As to quaternary structure, homodimer. NH4(+) serves as cofactor. It depends on K(+) as a cofactor.

It localises to the cytoplasm. It carries out the reaction (R)-pantothenate + ATP = (R)-4'-phosphopantothenate + ADP + H(+). It functions in the pathway cofactor biosynthesis; coenzyme A biosynthesis; CoA from (R)-pantothenate: step 1/5. In terms of biological role, catalyzes the phosphorylation of pantothenate (Pan), the first step in CoA biosynthesis. The polypeptide is Type III pantothenate kinase 2 (Francisella tularensis subsp. holarctica (strain LVS)).